Consider the following 309-residue polypeptide: Probable manganese-dependent inorganic pyrophosphatase (309 aa).

Residues H9, D13, D15, D75, H97, and D149 each coordinate Mn(2+).

Belongs to the PPase class C family. Requires Mn(2+) as cofactor.

It is found in the cytoplasm. It catalyses the reaction diphosphate + H2O = 2 phosphate + H(+). In Lactiplantibacillus plantarum (strain ATCC BAA-793 / NCIMB 8826 / WCFS1) (Lactobacillus plantarum), this protein is Probable manganese-dependent inorganic pyrophosphatase.